Here is a 539-residue protein sequence, read N- to C-terminus: O-phosphoserine--tRNA(Cys) ligase (539 aa).

Substrate-binding positions include 188–190, 233–235, 275–276, and N327; these read HMT, SAS, and YY.

It belongs to the class-II aminoacyl-tRNA synthetase family. O-phosphoseryl-tRNA(Cys) synthetase subfamily. Homotetramer. Interacts with SepCysS.

The enzyme catalyses tRNA(Cys) + O-phospho-L-serine + ATP = O-phospho-L-seryl-tRNA(Cys) + AMP + diphosphate. In terms of biological role, catalyzes the attachment of O-phosphoserine (Sep) to tRNA(Cys). This chain is O-phosphoserine--tRNA(Cys) ligase, found in Methanococcoides burtonii (strain DSM 6242 / NBRC 107633 / OCM 468 / ACE-M).